The following is a 406-amino-acid chain: 8-amino-7-oxononanoate synthase (406 aa).

Arg-20 contributes to the substrate binding site. 116-117 (GY) contacts pyridoxal 5'-phosphate. His-141 lines the substrate pocket. The pyridoxal 5'-phosphate site is built by Ser-187, His-215, and Thr-243. Lys-246 carries the post-translational modification N6-(pyridoxal phosphate)lysine. Thr-366 lines the substrate pocket.

It belongs to the class-II pyridoxal-phosphate-dependent aminotransferase family. BioF subfamily. In terms of assembly, homodimer. Pyridoxal 5'-phosphate serves as cofactor.

It carries out the reaction 6-carboxyhexanoyl-[ACP] + L-alanine + H(+) = (8S)-8-amino-7-oxononanoate + holo-[ACP] + CO2. The protein operates within cofactor biosynthesis; biotin biosynthesis. In terms of biological role, catalyzes the decarboxylative condensation of pimeloyl-[acyl-carrier protein] and L-alanine to produce 8-amino-7-oxononanoate (AON), [acyl-carrier protein], and carbon dioxide. The chain is 8-amino-7-oxononanoate synthase from Cupriavidus metallidurans (strain ATCC 43123 / DSM 2839 / NBRC 102507 / CH34) (Ralstonia metallidurans).